The primary structure comprises 638 residues: Eukaryotic translation initiation factor 2A (638 aa).

WD repeat units follow at residues 287–329 and 331–370; these read SKEG…FDFG and GPRN…KLAN. Basic and acidic residues predominate over residues 441 to 450; it reads KITKAKHEGI. The disordered stretch occupies residues 441-593; sequence KITKAKHEGI…SDKERKIRSV (153 aa). The residue at position 463 (Thr-463) is a Phosphothreonine. Residues 492–501 show a composition bias toward low complexity; that stretch reads AAAGGVNGNK. Over residues 583 to 593 the composition is skewed to basic and acidic residues; sequence ISDKERKIRSV.

The protein belongs to the WD repeat EIF2A family.

In terms of biological role, functions in the early steps of protein synthesis of a small number of specific mRNAs. Acts by directing the binding of methionyl-tRNAi to 40S ribosomal subunits. In contrast to the eIF-2 complex, it binds methionyl-tRNAi to 40S subunits in a codon-dependent manner, whereas the eIF-2 complex binds methionyl-tRNAi to 40S subunits in a GTP-dependent manner. This is Eukaryotic translation initiation factor 2A from Drosophila melanogaster (Fruit fly).